Here is a 689-residue protein sequence, read N- to C-terminus: UvrABC system protein C (689 aa).

Residues 1 to 19 (MTSDSSDTAKQIGSGQPSG) are compositionally biased toward polar residues. The interval 1 to 59 (MTSDSSDTAKQIGSGQPSGSPADMRRRDGVAPEQEVDPASLETDEDDEARLPDLPDEPV) is disordered. Residues 42–59 (ETDEDDEARLPDLPDEPV) show a composition bias toward acidic residues. The GIY-YIG domain maps to 83–161 (TSPGVYRMMN…IKQLRPRFNV (79 aa)). The UVR domain occupies 271–306 (RAVKEDLARAMEQAAADLAFERAALYRDRLAALSAI).

It belongs to the UvrC family. As to quaternary structure, interacts with UvrB in an incision complex.

It is found in the cytoplasm. In terms of biological role, the UvrABC repair system catalyzes the recognition and processing of DNA lesions. UvrC both incises the 5' and 3' sides of the lesion. The N-terminal half is responsible for the 3' incision and the C-terminal half is responsible for the 5' incision. The polypeptide is UvrABC system protein C (Nitrobacter winogradskyi (strain ATCC 25391 / DSM 10237 / CIP 104748 / NCIMB 11846 / Nb-255)).